Consider the following 820-residue polypeptide: Serine/threonine-protein phosphatase 4 regulatory subunit 3-B (820 aa).

A WH1 domain is found at 1–100; it reads MSDTRRRVKV…DEIWEKICQV (100 aa). Residues 682 to 694 are compositionally biased toward acidic residues; sequence ELWFNEDDEEEGE. Disordered regions lie at residues 682–711 and 750–820; these read ELWF…DFPE and AANG…RLGS. Over residues 701 to 711 the composition is skewed to basic and acidic residues; it reads EKTKPEDDFPE. Polar residues-rich tracts occupy residues 750 to 761 and 768 to 790; these read AANGANSTNSKS and PATS…STKG. Over residues 798–809 the composition is skewed to acidic residues; it reads YPDDEDEEEEED.

It belongs to the SMEK family. In terms of assembly, serine/threonine-protein phosphatase 4 (PP4) occurs in different assemblies of the catalytic and one or more regulatory subunits.

Regulatory subunit of serine/threonine-protein phosphatase 4 (PP4). In Xenopus laevis (African clawed frog), this protein is Serine/threonine-protein phosphatase 4 regulatory subunit 3-B.